A 767-amino-acid chain; its full sequence is Ribonucleoside-diphosphate reductase large subunit (767 aa).

Substrate is bound by residues threonine 176, serine 191 to cysteine 192, glycine 222, asparagine 392 to glutamate 396, and proline 578 to threonine 582. Residues cysteine 192 and cysteine 408 are joined by a disulfide bond. Residue asparagine 392 is the Proton acceptor of the active site. The active-site Cysteine radical intermediate is the cysteine 394. Glutamate 396 serves as the catalytic Proton acceptor.

Belongs to the ribonucleoside diphosphate reductase large chain family. Heterotetramer composed of a homodimer of the large subunit (R1) and a homodimer of the small subunit (R2). Larger multisubunit protein complex are also active, composed of (R1)n(R2)n.

The enzyme catalyses a 2'-deoxyribonucleoside 5'-diphosphate + [thioredoxin]-disulfide + H2O = a ribonucleoside 5'-diphosphate + [thioredoxin]-dithiol. Its function is as follows. Ribonucleoside-diphosphate reductase holoenzyme provides the precursors necessary for viral DNA synthesis. Allows virus growth in non-dividing cells, as well as reactivation from latency in infected hosts. Catalyzes the biosynthesis of deoxyribonucleotides from the corresponding ribonucleotides. The polypeptide is Ribonucleoside-diphosphate reductase large subunit (Saimiri sciureus (Common squirrel monkey)).